The primary structure comprises 356 residues: MGLLRIMMPPKLQLLAVVAFAVAMLFLENQIQKLEESRSKLERAIARHEVREIEQRHTMDGPRQDATLDEEEDMVIIYNRVPKTASTSFTNIAYDLCAKNKYHVLHINTTKNNPVMSLQDQMRFVKNITSWKEMKPGFYHGHVSYLDFAKFGVKKKPIYINVIRDPIERLVSYYYFLRFGDDYRPGLRRRKQGDKKTFDECVAEGGSDCAPEKLWLQIPFFCGHSSECWNVGSRWAMDQAKYNLINEYFLVGVTEELEDFIMLLEAALPRFFRGATELYRTGKKSHLRKTTEKKLPTKQTIAKLQQSDIWKMENEFYEFALEQFQFIRAHAVREKDGDLYILAQNFFYEKIYPKSN.

Residues 1 to 11 (MGLLRIMMPPK) are Cytoplasmic-facing. A helical; Signal-anchor for type II membrane protein transmembrane segment spans residues 12–28 (LQLLAVVAFAVAMLFLE). A coiled-coil region spans residues 24-51 (MLFLENQIQKLEESRSKLERAIARHEVR). Topologically, residues 29–356 (NQIQKLEESR…FYEKIYPKSN (328 aa)) are lumenal. Lys-83, Thr-84, Ala-85, Ser-86, Thr-87, and Ser-88 together coordinate adenosine 3',5'-bisphosphate. N-linked (GlcNAc...) asparagine glycosylation is found at Asn-108 and Asn-127. Active-site residues include His-140 and His-142. Adenosine 3',5'-bisphosphate contacts are provided by Arg-164 and Ser-172. Cystine bridges form between Cys-201-Cys-209 and Cys-222-Cys-228. Positions 279, 285, 290, and 293 each coordinate adenosine 3',5'-bisphosphate.

This sequence belongs to the sulfotransferase 3 family. As to quaternary structure, homotrimer. Interacts with the C5-epimerase GLCE. Post-translationally, N-glycosylated.

The protein resides in the golgi apparatus membrane. In terms of biological role, catalyzes the transfer of a sulfo group from 3'-phospho-5'-adenylyl sulfate (PAPS) to the 2-OH position of iduronic acid (IdoA) or glucuronic acid (GlcA) within the heparan sulfate (HS) chain and participates in HS biosynthesis. Required for metanephric development of kidney formation, suggesting that 2-O-sulfation within HS is essential for signaling between ureteric bud and metanephric mesenchyme. The protein is Heparan sulfate 2-O-sulfotransferase 1 of Pongo abelii (Sumatran orangutan).